A 380-amino-acid chain; its full sequence is Cytochrome b (380 aa).

4 helical membrane passes run 34–54 (FGSL…LLAM), 78–99 (WLIR…YLHI), 114–134 (WNTG…GYVL), and 179–199 (FFAL…IHLT). Heme b-binding residues include His84 and His98. Heme b contacts are provided by His183 and His197. An a ubiquinone-binding site is contributed by His202. A run of 4 helical transmembrane segments spans residues 227–247 (SKDI…ALLS), 289–309 (LGGV…PFLH), 321–341 (LSQA…WIGS), and 348–368 (FIII…ILLP).

It belongs to the cytochrome b family. The cytochrome bc1 complex contains 11 subunits: 3 respiratory subunits (MT-CYB, CYC1 and UQCRFS1), 2 core proteins (UQCRC1 and UQCRC2) and 6 low-molecular weight proteins (UQCRH/QCR6, UQCRB/QCR7, UQCRQ/QCR8, UQCR10/QCR9, UQCR11/QCR10 and a cleavage product of UQCRFS1). This cytochrome bc1 complex then forms a dimer. The cofactor is heme b.

It localises to the mitochondrion inner membrane. Its function is as follows. Component of the ubiquinol-cytochrome c reductase complex (complex III or cytochrome b-c1 complex) that is part of the mitochondrial respiratory chain. The b-c1 complex mediates electron transfer from ubiquinol to cytochrome c. Contributes to the generation of a proton gradient across the mitochondrial membrane that is then used for ATP synthesis. The sequence is that of Cytochrome b (MT-CYB) from Phalcoboenus australis (Striated caracara).